The following is an 867-amino-acid chain: Mitochondrial escape protein 2 (867 aa).

A mitochondrion-targeting transit peptide spans methionine 1–tyrosine 25. Residues serine 26–lysine 279 lie on the Mitochondrial matrix side of the membrane. Positions glycine 179–isoleucine 264 constitute an RRM domain. The chain crosses the membrane as a helical span at residues isoleucine 280–isoleucine 300. At arginine 301–phenylalanine 867 the chain is on the mitochondrial intermembrane side. Residues isoleucine 795 to serine 852 are a coiled coil.

Belongs to the YME2 family.

It is found in the mitochondrion inner membrane. In terms of biological role, plays a role in maintaining the mitochondrial genome and in controlling the mtDNA escape. Involved in the regulation of mtDNA nucleotide structure and number. May have a dispensable role in early maturation of pre-rRNA. The polypeptide is Mitochondrial escape protein 2 (PRP13) (Candida albicans (strain SC5314 / ATCC MYA-2876) (Yeast)).